We begin with the raw amino-acid sequence, 141 residues long: Large ribosomal subunit protein uL11 (141 aa).

This sequence belongs to the universal ribosomal protein uL11 family. As to quaternary structure, part of the ribosomal stalk of the 50S ribosomal subunit. Interacts with L10 and the large rRNA to form the base of the stalk. L10 forms an elongated spine to which L12 dimers bind in a sequential fashion forming a multimeric L10(L12)X complex. In terms of processing, one or more lysine residues are methylated.

Functionally, forms part of the ribosomal stalk which helps the ribosome interact with GTP-bound translation factors. The sequence is that of Large ribosomal subunit protein uL11 from Streptococcus pneumoniae serotype 2 (strain D39 / NCTC 7466).